Consider the following 213-residue polypeptide: Small ribosomal subunit protein uS5 (213 aa).

In terms of domain architecture, S5 DRBM spans 49–112 (LEEEVMDVNL…DNAKYNLIKV (64 aa)).

The protein belongs to the universal ribosomal protein uS5 family. As to quaternary structure, part of the 30S ribosomal subunit. Contacts protein S4.

Functionally, with S4 and S12 plays an important role in translational accuracy. The protein is Small ribosomal subunit protein uS5 of Methanobrevibacter smithii (strain ATCC 35061 / DSM 861 / OCM 144 / PS).